A 232-amino-acid chain; its full sequence is YlmG homolog protein 1-1, chloroplastic (232 aa).

Residues 1 to 16 constitute a chloroplast transit peptide; that stretch reads MAAITALTLRSPVYLP. 2 helical membrane passes run 147–167 and 201–221; these read LTVVAVGIKKWLDIYSGVLMV and IIPPIFDTLDVSPLLAFAVLG.

It belongs to the YggT family.

The protein resides in the plastid. It localises to the chloroplast thylakoid membrane. Its function is as follows. Required for the proper distribution of nucleoids in chloroplasts. The nucleoid partitioning by YLMG1-1 may be related to chloroplast division processes. The chain is YlmG homolog protein 1-1, chloroplastic from Arabidopsis thaliana (Mouse-ear cress).